Reading from the N-terminus, the 212-residue chain is 3-demethoxyubiquinol 3-hydroxylase (212 aa).

Residues 21–42 form a disordered region; it reads SRMSRPLPVPQESAVTEAAPEL. Residues E61, E91, H94, E143, E175, and H178 each contribute to the Fe cation site.

This sequence belongs to the COQ7 family. Fe cation is required as a cofactor.

Its subcellular location is the cell membrane. The catalysed reaction is a 5-methoxy-2-methyl-3-(all-trans-polyprenyl)benzene-1,4-diol + AH2 + O2 = a 3-demethylubiquinol + A + H2O. The protein operates within cofactor biosynthesis; ubiquinone biosynthesis. Functionally, catalyzes the hydroxylation of 2-nonaprenyl-3-methyl-6-methoxy-1,4-benzoquinol during ubiquinone biosynthesis. The sequence is that of 3-demethoxyubiquinol 3-hydroxylase from Paraburkholderia xenovorans (strain LB400).